The primary structure comprises 1419 residues: Multidrug resistance protein 1 (1419 aa).

The r domain; regulates transporter activity stretch occupies residues 1 to 37; it reads MGKEQKEKKDGNLSIKEEVEKELNKKSTAELFRKIKN. The Cytoplasmic portion of the chain corresponds to 1–60; it reads MGKEQKEKKDGNLSIKEEVEKELNKKSTAELFRKIKNEKISFFLPFKCLPAQHRKLLFIS. The ABC transmembrane type-1 1 domain maps to 58 to 345; that stretch reads FISFVCAVLS…ILPNITEYMK (288 aa). Residues 61 to 81 form a helical membrane-spanning segment; sequence FVCAVLSGGTLPFFISVFGVI. Residues 82–90 lie on the Vacuolar side of the membrane; the sequence is LKNMNLGDD. A helical membrane pass occupies residues 91–111; that stretch reads INPIILSLVSIGLVQFILSMI. The Cytoplasmic portion of the chain corresponds to 112 to 168; that stretch reads SSYCMDVITSKILKTLKLEYLRSVFYQDGQFHDNNPGSKLRSDLDFYLEQVSSGIGT. A helical membrane pass occupies residues 169–189; the sequence is KFITIFTYASSFLGLYIWSLI. The Vacuolar portion of the chain corresponds to 190–191; the sequence is KN. Residues 192-212 traverse the membrane as a helical segment; that stretch reads ARLTLCITCVFPLIYVCGVIC. The Cytoplasmic portion of the chain corresponds to 213–275; the sequence is NKKVKLNKKT…KYILKANFVE (63 aa). A helical transmembrane segment spans residues 276 to 296; that stretch reads ALHIGLINGLILVSYAFGFWY. The Vacuolar portion of the chain corresponds to 297–316; the sequence is GTRIIINSATNQYPNNDFNG. Residues 317–337 form a helical membrane-spanning segment; the sequence is ASVISILLGVLISMFMLTIIL. At 338-788 the chain is on the cytoplasmic side; sequence PNITEYMKAL…YKEIFSYKKD (451 aa). The 285-residue stretch at 378 to 662 folds into the ABC transporter 1 domain; that stretch reads IEFKNVRFHY…NNNNNNNNNK (285 aa). 14 residues coordinate ATP: tyrosine 387, threonine 389, arginine 390, serine 415, cysteine 417, glycine 418, lysine 419, serine 420, threonine 421, glutamine 462, lysine 562, serine 564, glycine 566, and glutamine 567. Glutamine 462 is a Mg(2+) binding site. 2 disordered regions span residues 639–665 and 697–752; these read ERSDNNNNNNNDDNNNNNNNNNNKINN and SSNK…TAEN. 2 stretches are compositionally biased toward low complexity: residues 643–665 and 697–715; these read NNNNNNNDDNNNNNNNNNNKINN and SSNKSSNNGNDNGSDNKSS. Positions 723 to 749 are enriched in polar residues; it reads GNDADNMNSLSIHENENISNNRNCKNT. Residues 789-809 traverse the membrane as a helical segment; that stretch reads VTIIFFSILVAGGLYPVFALL. The region spanning 791–1083 is the ABC transmembrane type-1 2 domain; sequence IIFFSILVAG…GSYAGKLMSL (293 aa). Residues 810-829 lie on the Vacuolar side of the membrane; the sequence is YARYVSTLFDFANLEYNSNK. A helical transmembrane segment spans residues 830 to 850; that stretch reads YSIYILLIAIAMFISETLKNY. Residues 851–907 lie on the Cytoplasmic side of the membrane; sequence YNNKIGEKVEKTMKRRLFENILYQEMSFFDQDKNTPGVLSAHINRDVHLLKTGLVNN. The next 2 membrane-spanning stretches (helical) occupy residues 908-928 and 929-949; these read IVIFSHFIMLFLVSMVMSFYF and CPIVAAVLTFIYFINMRVFAV. Residues 950-1032 are Cytoplasmic-facing; the sequence is RARLTKSKEI…RIIVNAALWG (83 aa). A helical membrane pass occupies residues 1033-1053; sequence FSQSAQLFINSFAYWFGSFLI. Residues 1054–1057 lie on the Vacuolar side of the membrane; it reads KRGT. Residues 1058 to 1078 traverse the membrane as a helical segment; it reads ILVDDFMKSLFTFIFTGSYAG. The Cytoplasmic segment spans residues 1079–1419; it reads KLMSLKGDSE…IYKKYVKLAK (341 aa). The ABC transporter 2 domain maps to 1126-1416; sequence VDIKDVNFRY…QDGIYKKYVK (291 aa). Tyrosine 1135, arginine 1138, threonine 1163, glycine 1164, glycine 1166, lysine 1167, serine 1168, threonine 1169, glutamine 1256, leucine 1312, serine 1313, glycine 1315, and glutamine 1316 together coordinate ATP. Serine 1168 lines the Mg(2+) pocket. Position 1256 (glutamine 1256) interacts with Mg(2+).

This sequence belongs to the ABC transporter superfamily. ABCB family. Multidrug resistance exporter (TC 3.A.1.201) subfamily.

The protein localises to the vacuole membrane. The catalysed reaction is ATP + H2O + xenobioticSide 1 = ADP + phosphate + xenobioticSide 2.. Functionally, energy-dependent efflux pump responsible for decreased drug accumulation in multidrug-resistant cells. Transports lumefantrine, mefloquine, chloroquine, quinine, quinidine, amodiaquine, piperaquine, dihydroartemisinin and quinacrine. The sequence is that of Multidrug resistance protein 1 from Plasmodium falciparum (isolate 3D7).